A 677-amino-acid polypeptide reads, in one-letter code: DNA ligase (677 aa).

NAD(+)-binding positions include 38–42 (DSVYD), 87–88 (SL), and glutamate 119. The N6-AMP-lysine intermediate role is filled by lysine 121. Residues arginine 142, glutamate 179, lysine 296, and lysine 320 each coordinate NAD(+). The Zn(2+) site is built by cysteine 414, cysteine 417, cysteine 432, and cysteine 438. Positions 595–677 (VVKSEIAGKT…LKLLKSKGVF (83 aa)) constitute a BRCT domain.

It belongs to the NAD-dependent DNA ligase family. LigA subfamily. It depends on Mg(2+) as a cofactor. The cofactor is Mn(2+).

It carries out the reaction NAD(+) + (deoxyribonucleotide)n-3'-hydroxyl + 5'-phospho-(deoxyribonucleotide)m = (deoxyribonucleotide)n+m + AMP + beta-nicotinamide D-nucleotide.. Its function is as follows. DNA ligase that catalyzes the formation of phosphodiester linkages between 5'-phosphoryl and 3'-hydroxyl groups in double-stranded DNA using NAD as a coenzyme and as the energy source for the reaction. It is essential for DNA replication and repair of damaged DNA. This is DNA ligase from Coxiella burnetii (strain CbuG_Q212) (Coxiella burnetii (strain Q212)).